A 514-amino-acid chain; its full sequence is MSSPRGASSMSSRSPVNLEPESDSVDSEWVFGKYRLLGALRSATLEGEDLEGGIPQELLNVLVLYEKMKSTKSELSGFVTYLALMTLGIFDFDRSLKRLVDEGVLGMFRFNRMLTRVFFGYATGDDALIEGLLDTWFAFMVLLARFPVIPAQLIDSNFCVLCMYESDHSLATADTRFKTILCDHFTEASVTAGGDPCDSAEVTAVVKKTTQIDLSLDDFHERVARGDNVRELAVKRDTTLTTRKNGSINNFTKALNRARETCAMDRMESSLVEFQKKLREVNNMINRLTNPKNLNIFAAELFNVFVHAHHRRKTIRERLSDGLGDWKGRAAHMLFLTTKLRTAVDKNLLTTIITEFYAAAVPPVYRYNHKYNMHAHRVIFFKHMESIGFTNEGITAFQYQLNQVDLREVVGQDYRSDIIPITTNAENFNRLTELFWVIANICTFIFIHNKTIKLHHGDAPDLNIDELPDGLYLFNGSVGFKHDNGETRSGVWSSERTLDLLDTYDQLLSTGVIG.

The span at 1–15 (MSSPRGASSMSSRSP) shows a compositional bias: low complexity. The disordered stretch occupies residues 1 to 22 (MSSPRGASSMSSRSPVNLEPES).

This is an uncharacterized protein from Ictaluridae (bullhead catfishes).